The chain runs to 500 residues: Coiled-coil domain-containing protein 125 (500 aa).

Residues 1-105 are disordered; it reads MSKVPRSSSE…TDSNSELSDE (105 aa). A compositionally biased stretch (acidic residues) spans 10–23; that stretch reads EAEDIWETEDDMTE. Over residues 92–101 the composition is skewed to polar residues; it reads RLSSTDSNSE. Coiled-coil stretches lie at residues 101–237 and 286–314; these read ELSD…LEAL and STRK…TADA. The residue at position 492 (S492) is a Phosphoserine.

In terms of tissue distribution, expressed in many tissues, with highest levels in spleen, thymus and bone marrow.

It localises to the cytoplasm. Functionally, may be involved in the regulation of cell migration. This is Coiled-coil domain-containing protein 125 (Ccdc125) from Mus musculus (Mouse).